The following is a 706-amino-acid chain: MARTTPINRYRNIGICAHVDAGKTTTTERVLFYTGVNHKLGEVHDGAATTDWMVQEQERGITITSAAVTTFWKGSRGQYDNYRVNVIDTPGHVDFTIEVERSLRVLDGAVVVFCGTSGVEPQSETVWRQANKYGVPRIVYVNKMDRQGANFLRVVEQIKKRLGHTPVPVQLAIGAEENFVGQVDLIKMKAIYWNDDDKGMTYREEEIPAELKDLAEEWRSSMVEAAAEANEELMNKYLEEGELSEAEIKEGLRLRTLACEIVPAVCGSSFKNKGVPLVLDAVIDYLPAPTEIPAIKGVSPDDETVEDERHADDNEPFSSLAFKIATDPFVGTLTFARVYSGVLSSGDSVLNSVKGKKERVGRMVQMHANQREEIKEVRAGDIAALIGMKDVTTGDTLCSIEKPIILERMDFPEPVISVAVEPKTKADQEKMGIALGKLAQEDPSFRVKTDEESGQTIISGMGELHLDIIVDRMKREFGVEANIGKPQVAYRETITKDNVEIEGKFVRQSGGRGQFGHCWIRFSAADVDEKGNITEGLVFENEVVGGVVPKEYIPAIQKGIEEQMKNGVVAGYPLIGLKATVFDGSYHDVDSNEMAFKIAASMATKQLAQKGGGKVLEPIMKVEVVTPEDYMGDVMGDLNRRRGLIQGMEDTVSGKVIRAEVPLGEMFGYATDVRSMSQGRASYSMEFSKYAEAPSNIVEALVKKQG.

Residues 8–290 form the tr-type G domain; it reads NRYRNIGICA…AVIDYLPAPT (283 aa). Residues 17–24, 88–92, and 142–145 contribute to the GTP site; these read AHVDAGKT, DTPGH, and NKMD.

It belongs to the TRAFAC class translation factor GTPase superfamily. Classic translation factor GTPase family. EF-G/EF-2 subfamily.

The protein localises to the cytoplasm. Catalyzes the GTP-dependent ribosomal translocation step during translation elongation. During this step, the ribosome changes from the pre-translocational (PRE) to the post-translocational (POST) state as the newly formed A-site-bound peptidyl-tRNA and P-site-bound deacylated tRNA move to the P and E sites, respectively. Catalyzes the coordinated movement of the two tRNA molecules, the mRNA and conformational changes in the ribosome. The protein is Elongation factor G 1 of Pseudomonas aeruginosa (strain ATCC 15692 / DSM 22644 / CIP 104116 / JCM 14847 / LMG 12228 / 1C / PRS 101 / PAO1).